The following is a 273-amino-acid chain: 3-((Z)-2-isocyanoethenyl)-1H-indole synthase (273 aa).

3 residues coordinate Fe cation: His-105, Asp-107, and His-254.

Belongs to the TfdA dioxygenase family. Requires Fe(2+) as cofactor.

It catalyses the reaction (2S)-3-(1H-indol-3-yl)-2-isocyanopropanoate + 2-oxoglutarate + O2 + H(+) = 3-[(Z)-2-isocyanoethenyl]-1H-indole + succinate + 2 CO2 + H2O. Functionally, involved in the biosynthesis of ambiguines, a family of hapalindole-type alkaloids. Responsible for the synthesis of Z-3-(2-isocyanoethen)-indole, a biosynthetic precursor to all ambiguines. The sequence is that of 3-((Z)-2-isocyanoethenyl)-1H-indole synthase from Fischerella ambigua (strain UTEX 1903).